The following is a 269-amino-acid chain: Putative pyruvate, phosphate dikinase regulatory protein (269 aa).

151–158 (GVSRSSKT) is a binding site for ADP.

Belongs to the pyruvate, phosphate/water dikinase regulatory protein family. PDRP subfamily.

The enzyme catalyses N(tele)-phospho-L-histidyl/L-threonyl-[pyruvate, phosphate dikinase] + ADP = N(tele)-phospho-L-histidyl/O-phospho-L-threonyl-[pyruvate, phosphate dikinase] + AMP + H(+). The catalysed reaction is N(tele)-phospho-L-histidyl/O-phospho-L-threonyl-[pyruvate, phosphate dikinase] + phosphate + H(+) = N(tele)-phospho-L-histidyl/L-threonyl-[pyruvate, phosphate dikinase] + diphosphate. Bifunctional serine/threonine kinase and phosphorylase involved in the regulation of the pyruvate, phosphate dikinase (PPDK) by catalyzing its phosphorylation/dephosphorylation. The polypeptide is Putative pyruvate, phosphate dikinase regulatory protein (Geobacter sulfurreducens (strain ATCC 51573 / DSM 12127 / PCA)).